The following is a 312-amino-acid chain: Pantothenate kinase (312 aa).

97 to 104 (GSVAVGKS) lines the ATP pocket.

Belongs to the prokaryotic pantothenate kinase family.

The protein resides in the cytoplasm. The catalysed reaction is (R)-pantothenate + ATP = (R)-4'-phosphopantothenate + ADP + H(+). It functions in the pathway cofactor biosynthesis; coenzyme A biosynthesis; CoA from (R)-pantothenate: step 1/5. This Mycolicibacterium vanbaalenii (strain DSM 7251 / JCM 13017 / BCRC 16820 / KCTC 9966 / NRRL B-24157 / PYR-1) (Mycobacterium vanbaalenii) protein is Pantothenate kinase.